A 656-amino-acid chain; its full sequence is Protein EMBRYO SAC DEVELOPMENT ARREST 30 (656 aa).

Residues 9 to 29 form a helical; Signal-anchor for type II membrane protein membrane-spanning segment; sequence WIALFVLILSMGSLVVHLSMT. N-linked (GlcNAc...) asparagine glycosylation occurs at Asn119. A disordered region spans residues 381-426; sequence LSELVGPETPLPENTYKMPPRKSDKQLKEEWNKAGPRPRPLPPPPD. Residues 401-412 show a composition bias toward basic and acidic residues; the sequence is RKSDKQLKEEWN. A compositionally biased stretch (pro residues) spans 417 to 426; the sequence is RPRPLPPPPD. N-linked (GlcNAc...) asparagine glycans are attached at residues Asn444, Asn522, Asn534, and Asn544. Residues 631-656 are disordered; sequence SETEEEFAKSKVASAFDQDEEWDPND. Acidic residues predominate over residues 647-656; it reads DQDEEWDPND.

Belongs to the glycosyltransferase GT106 family.

The protein resides in the membrane. It functions in the pathway glycan metabolism. This Arabidopsis thaliana (Mouse-ear cress) protein is Protein EMBRYO SAC DEVELOPMENT ARREST 30.